The following is a 295-amino-acid chain: Alpha-ketoglutarate-dependent sulfate ester dioxygenase (295 aa).

Residue His71 participates in substrate binding. His98 and Asp100 together coordinate Fe cation. Val101 serves as a coordination point for substrate. Thr125 contributes to the 2-oxoglutarate binding site. His252 contributes to the Fe cation binding site. 2 residues coordinate 2-oxoglutarate: Arg263 and Arg267.

This sequence belongs to the TfdA dioxygenase family. Requires Fe(2+) as cofactor.

It catalyses the reaction a primary linear alkyl sulfate ester + 2-oxoglutarate + O2 = an aldehyde + sulfate + succinate + CO2 + H(+). It carries out the reaction 2-ethylhexyl sulfate + 2-oxoglutarate + O2 = 2-ethylhexanal + sulfate + succinate + CO2 + H(+). The catalysed reaction is hexyl sulfate + 2-oxoglutarate + O2 = hexanal + sulfate + succinate + CO2 + H(+). The enzyme catalyses pentyl sulfate + 2-oxoglutarate + O2 = pentanal + sulfate + succinate + CO2 + H(+). It catalyses the reaction heptyl sulfate + 2-oxoglutarate + O2 = heptanal + sulfate + succinate + CO2 + H(+). In terms of biological role, alpha-ketoglutarate-dependent sulfate ester dioxygenase, which oxidizes medium-chain alkyl-sulfate esters. Shows preference for 2-ethylhexyl sulfate (2-EHS) in vitro, leading to the formation of succinate and 2-ethylhexanal. Has likely a role in sulfate scavenging in vivo. Its function is as follows. Also causes the inactivation of the 2-carboxyquinoxaline Ty38c (an antitubercular compound that inhibits DprE1) via oxidative decarboxylation, using Ty38c instead of alpha-ketoglutarate as a substrate. Is thus responsible for primary resistance of M.tuberculosis to Ty38c in vitro. Overexpression of Rv3406 causes resistance to Ty38c. The sequence is that of Alpha-ketoglutarate-dependent sulfate ester dioxygenase from Mycobacterium tuberculosis (strain ATCC 25618 / H37Rv).